The following is a 347-amino-acid chain: Glycerol-1-phosphate dehydrogenase [NAD(P)+] (347 aa).

Residues 94 to 98 (GKVID) and 116 to 119 (TAAS) each bind NAD(+). Position 121 (Asp-121) interacts with substrate. An NAD(+)-binding site is contributed by Ser-125. Asp-168 is a binding site for substrate. Residues Asp-168 and His-248 each contribute to the Zn(2+) site. Position 252 (His-252) interacts with substrate. Zn(2+) is bound at residue His-264.

The protein belongs to the glycerol-1-phosphate dehydrogenase family. As to quaternary structure, homooctamer. Zn(2+) serves as cofactor.

It is found in the cytoplasm. It carries out the reaction sn-glycerol 1-phosphate + NAD(+) = dihydroxyacetone phosphate + NADH + H(+). It catalyses the reaction sn-glycerol 1-phosphate + NADP(+) = dihydroxyacetone phosphate + NADPH + H(+). It functions in the pathway membrane lipid metabolism; glycerophospholipid metabolism. Partially inhibited by divalent metal cations such as Co(2+), Cu(2+) and Ni(2+). Catalyzes the NAD(P)H-dependent reduction of dihydroxyacetonephosphate (DHAP or glycerone phosphate) to glycerol 1-phosphate (G1P). The G1P thus generated is used as the glycerophosphate backbone of phospholipids in the cellular membranes of Archaea. Is also able to catalyze the reverse reaction, i.e. the NAD(P)(+)-dependent oxidation of G1P but not of G3P. Is not active toward glycerol, dihydroxyacetone, glyceraldehyde-3-phosphate, glyceraldehyde and glycerol-2-phosphate. The chain is Glycerol-1-phosphate dehydrogenase [NAD(P)+] (egsA) from Methanothermobacter thermautotrophicus (strain ATCC 29096 / DSM 1053 / JCM 10044 / NBRC 100330 / Delta H) (Methanobacterium thermoautotrophicum).